The chain runs to 92 residues: DNA-directed RNA polymerase subunit Rpo11 (92 aa).

This sequence belongs to the archaeal Rpo11/eukaryotic RPB11/RPC19 RNA polymerase subunit family. In terms of assembly, part of the RNA polymerase complex.

The protein localises to the cytoplasm. It carries out the reaction RNA(n) + a ribonucleoside 5'-triphosphate = RNA(n+1) + diphosphate. Its function is as follows. DNA-dependent RNA polymerase (RNAP) catalyzes the transcription of DNA into RNA using the four ribonucleoside triphosphates as substrates. This Halorubrum lacusprofundi (strain ATCC 49239 / DSM 5036 / JCM 8891 / ACAM 34) protein is DNA-directed RNA polymerase subunit Rpo11.